The primary structure comprises 203 residues: EF-hand calcium-binding domain-containing protein 8 (203 aa).

Residues 61–107 (SSEKPGESPKPQKMAQPGGSQKKETSRSVPVTDPTSHNSEINQRDQQ) are disordered. Polar residues predominate over residues 87–107 (RSVPVTDPTSHNSEINQRDQQ). EF-hand domains lie at 111–145 (MHLA…VLSS) and 146–181 (MSEE…EFQG).

The polypeptide is EF-hand calcium-binding domain-containing protein 8 (Efcab8) (Mus musculus (Mouse)).